The chain runs to 252 residues: Flap endonuclease Xni (252 aa).

Mg(2+) is bound at residue Asp105. In terms of domain architecture, 5'-3' exonuclease spans 161–251 (VESTQFIDYL…NVNLKQFRIE (91 aa)). K(+)-binding residues include Leu172, Ala173, Pro181, Val183, and Ile186. An interaction with DNA region spans residues 185 to 190 (GIGPKS).

This sequence belongs to the Xni family. Mg(2+) serves as cofactor. Requires K(+) as cofactor.

Has flap endonuclease activity. During DNA replication, flap endonucleases cleave the 5'-overhanging flap structure that is generated by displacement synthesis when DNA polymerase encounters the 5'-end of a downstream Okazaki fragment. In Shewanella halifaxensis (strain HAW-EB4), this protein is Flap endonuclease Xni.